The primary structure comprises 252 residues: NAP1-related protein 2 (252 aa).

Over residues 1–15 (MTAPADKGKKAKTDA) the composition is skewed to basic and acidic residues. The segment at 1–23 (MTAPADKGKKAKTDADGGAAEEN) is disordered. The stretch at 26–67 (IDGALVLSIEKLQEIQDELEKVNEEASDKVLEVEQKYSEIRR) forms a coiled coil. A disordered region spans residues 222 to 252 (YFNNEAEELGEDDDEEGSDADEGEEDEEEEN). The segment covering 226–252 (EAEELGEDDDEEGSDADEGEEDEEEEN) has biased composition (acidic residues).

It belongs to the nucleosome assembly protein (NAP) family.

The protein resides in the nucleus. It localises to the cytoplasm. Acts as a histone H2A/H2B chaperone in nucleosome assembly. The sequence is that of NAP1-related protein 2 from Oryza sativa subsp. indica (Rice).